The chain runs to 242 residues: UPF0246 protein SPN23F15130 (242 aa).

The protein belongs to the UPF0246 family.

The chain is UPF0246 protein SPN23F15130 from Streptococcus pneumoniae (strain ATCC 700669 / Spain 23F-1).